The chain runs to 270 residues: Extracellular metalloprotease MCYG_04966 (270 aa).

The first 19 residues, 1 to 19 (MRLSLFLSGLAAAGSIVSA), serve as a signal peptide directing secretion. N-linked (GlcNAc...) asparagine glycosylation occurs at Asn-135. His-184 serves as a coordination point for Zn(2+). Glu-185 is an active-site residue. His-188 is a binding site for Zn(2+). Asn-199 is a glycosylation site (N-linked (GlcNAc...) asparagine). The interval 208–227 (VADTPPQSKKTSGCPNSQDS) is disordered. Over residues 212–227 (PPQSKKTSGCPNSQDS) the composition is skewed to polar residues. Residues Cys-221 and Cys-247 are joined by a disulfide bond.

Belongs to the peptidase M43B family.

It is found in the secreted. Its function is as follows. Secreted metalloproteinase that allows assimilation of proteinaceous substrates. Plays a pivotal role as a pathogenicity determinant during infections and contributes to the ability of the pathogen to persist within the mammalian host. The polypeptide is Extracellular metalloprotease MCYG_04966 (Arthroderma otae (strain ATCC MYA-4605 / CBS 113480) (Microsporum canis)).